The following is a 507-amino-acid chain: BPI fold-containing family C protein (507 aa).

The signal sequence occupies residues 1–23 (MCTKTIPVLWGCFLLWNLYVSSS). Residues Asn-79, Asn-92, and Asn-113 are each glycosylated (N-linked (GlcNAc...) asparagine). A disulfide bond links Cys-161 and Cys-200. 7 N-linked (GlcNAc...) asparagine glycosylation sites follow: Asn-213, Asn-225, Asn-257, Asn-301, Asn-355, Asn-372, and Asn-415.

The protein belongs to the BPI/LBP/Plunc superfamily. BPI/LBP family. Detected in the basal layer of the epidermis from inflammatory skin from psoriasis patients, but not in normal skin.

It localises to the secreted. The sequence is that of BPI fold-containing family C protein (BPIFC) from Homo sapiens (Human).